Consider the following 314-residue polypeptide: DNA-directed RNA polymerase subunit alpha (314 aa).

The tract at residues 1–228 is alpha N-terminal domain (alpha-NTD); the sequence is MIEIEKPRIE…EHLNIFVGLT (228 aa). The tract at residues 245-314 is alpha C-terminal domain (alpha-CTD); the sequence is KEKVLEMSIE…DLGLGLRKED (70 aa).

This sequence belongs to the RNA polymerase alpha chain family. In terms of assembly, homodimer. The RNAP catalytic core consists of 2 alpha, 1 beta, 1 beta' and 1 omega subunit. When a sigma factor is associated with the core the holoenzyme is formed, which can initiate transcription.

The catalysed reaction is RNA(n) + a ribonucleoside 5'-triphosphate = RNA(n+1) + diphosphate. DNA-dependent RNA polymerase catalyzes the transcription of DNA into RNA using the four ribonucleoside triphosphates as substrates. The sequence is that of DNA-directed RNA polymerase subunit alpha from Staphylococcus haemolyticus (strain JCSC1435).